The chain runs to 434 residues: Glutamyl-tRNA(Gln) amidotransferase subunit A (434 aa).

Active-site charge relay system residues include Lys57 and Ser132. Catalysis depends on Ser156, which acts as the Acyl-ester intermediate.

It belongs to the amidase family. GatA subfamily. In terms of assembly, heterotrimer of A, B and C subunits.

It catalyses the reaction L-glutamyl-tRNA(Gln) + L-glutamine + ATP + H2O = L-glutaminyl-tRNA(Gln) + L-glutamate + ADP + phosphate + H(+). In terms of biological role, allows the formation of correctly charged Gln-tRNA(Gln) through the transamidation of misacylated Glu-tRNA(Gln) in organisms which lack glutaminyl-tRNA synthetase. The reaction takes place in the presence of glutamine and ATP through an activated gamma-phospho-Glu-tRNA(Gln). This Methanocaldococcus jannaschii (strain ATCC 43067 / DSM 2661 / JAL-1 / JCM 10045 / NBRC 100440) (Methanococcus jannaschii) protein is Glutamyl-tRNA(Gln) amidotransferase subunit A (gatA).